Here is a 4427-residue protein sequence, read N- to C-terminus: Dynein axonemal heavy chain 2 (4427 aa).

Residues 1-73 are disordered; it reads MSSKAEKKQR…AQSEESVEPE (73 aa). The segment at 1–1764 is stem; the sequence is MSSKAEKKQR…VIRQTNTQFQ (1764 aa). The segment covering 14–23 has biased composition (polar residues); it reads RGSSQASWSG. A compositionally biased stretch (basic and acidic residues) spans 50–59; that stretch reads LPKEEPEPRL. The stretch at 1404–1439 is one TPR 1 repeat; the sequence is EDNQVALSTMKASRFVKAFEKDVDHWERCLSLILEV. AAA stretches follow at residues 1765 to 1986, 2046 to 2273, 2378 to 2625, and 2722 to 2974; these read YNYE…LLRY, ETVE…DNCK, RYPP…VFQG, and EYNL…LRRH. ATP is bound by residues 1803-1810, 2084-2091, and 2416-2423; these read GPAGTGKT, GCTGSGKT, and GPVGTGKT. The TPR 2 repeat unit spans residues 2721–2754; it reads NEYNLSPSVVPMQLVLFREAIEHITRIVRVIGQP. ATP is bound at residue 2762 to 2769; the sequence is GIGGSGRQ. The tract at residues 2989–3272 is stalk; that stretch reads YKKLLGEKRQ…EELRKKSEEM (284 aa). A coiled-coil region spans residues 3012-3049; sequence FKIDETREKVQVMSLELEDAKKKVAEFQKQCEEYLVII. A TPR 3 repeat occupies 3072 to 3105; that stretch reads VEEIKCQALADNAQKDLEEALPALEEAMRALESL. Coiled coils occupy residues 3216–3304 and 3523–3567; these read KRIR…EEDL and VRKE…GSLL. AAA regions lie at residues 3358 to 3588 and 3804 to 4023; these read LCNP…EVTE and VTSF…LLSL. TPR repeat units lie at residues 4072 to 4104 and 4105 to 4140; these read STPF…LLPG and MDPP…QPQI.

This sequence belongs to the dynein heavy chain family. In terms of assembly, part of the axonemal inner dynein arm complex that consists of at least two heavy chains and a number of intermediate and light chains. Interacts with DNAI4. As to expression, expressed primarily in trachea and testis, 2 tissues containing axonemal structures. Also expressed in lung. Expressed in spermatozoa (at protein level).

Its subcellular location is the cytoplasm. The protein resides in the cytoskeleton. The protein localises to the cilium axoneme. It is found in the flagellum axoneme. Its function is as follows. As part of the axonemal inner dynein arm complex plays a central role in ciliary beat. Expressed in sperm flagellum, it is required for sperm motility. Dyneins are microtubule-based molecular motors possessing ATPase activities that can convert the chemical energy of ATP into relative sliding between adjacent microtubule doublets to generate ciliary bending. The protein is Dynein axonemal heavy chain 2 of Homo sapiens (Human).